A 582-amino-acid polypeptide reads, in one-letter code: Aspartate--tRNA ligase (582 aa).

Glutamate 174 contributes to the L-aspartate binding site. The interval 198–201 (QITK) is aspartate. Residue arginine 220 coordinates L-aspartate. ATP-binding positions include 220-222 (RDE) and glutamine 229. L-aspartate is bound at residue histidine 443. Glutamate 477 is an ATP binding site. Residue arginine 484 participates in L-aspartate binding. 529-532 (GLDR) lines the ATP pocket.

Belongs to the class-II aminoacyl-tRNA synthetase family. Type 1 subfamily. Homodimer.

It is found in the cytoplasm. The enzyme catalyses tRNA(Asp) + L-aspartate + ATP = L-aspartyl-tRNA(Asp) + AMP + diphosphate. In terms of biological role, catalyzes the attachment of L-aspartate to tRNA(Asp) in a two-step reaction: L-aspartate is first activated by ATP to form Asp-AMP and then transferred to the acceptor end of tRNA(Asp). The protein is Aspartate--tRNA ligase of Streptococcus pyogenes serotype M3 (strain ATCC BAA-595 / MGAS315).